A 558-amino-acid polypeptide reads, in one-letter code: Dihydroxy-acid dehydratase (558 aa).

Asp78 lines the Mg(2+) pocket. Cys119 serves as a coordination point for [2Fe-2S] cluster. Positions 120 and 121 each coordinate Mg(2+). The residue at position 121 (Lys121) is an N6-carboxylysine. Cys192 is a [2Fe-2S] cluster binding site. Glu446 lines the Mg(2+) pocket. Catalysis depends on Ser472, which acts as the Proton acceptor.

It belongs to the IlvD/Edd family. As to quaternary structure, homodimer. It depends on [2Fe-2S] cluster as a cofactor. Requires Mg(2+) as cofactor.

It carries out the reaction (2R)-2,3-dihydroxy-3-methylbutanoate = 3-methyl-2-oxobutanoate + H2O. The enzyme catalyses (2R,3R)-2,3-dihydroxy-3-methylpentanoate = (S)-3-methyl-2-oxopentanoate + H2O. It participates in amino-acid biosynthesis; L-isoleucine biosynthesis; L-isoleucine from 2-oxobutanoate: step 3/4. Its pathway is amino-acid biosynthesis; L-valine biosynthesis; L-valine from pyruvate: step 3/4. In terms of biological role, functions in the biosynthesis of branched-chain amino acids. Catalyzes the dehydration of (2R,3R)-2,3-dihydroxy-3-methylpentanoate (2,3-dihydroxy-3-methylvalerate) into 2-oxo-3-methylpentanoate (2-oxo-3-methylvalerate) and of (2R)-2,3-dihydroxy-3-methylbutanoate (2,3-dihydroxyisovalerate) into 2-oxo-3-methylbutanoate (2-oxoisovalerate), the penultimate precursor to L-isoleucine and L-valine, respectively. In Campylobacter lari (strain RM2100 / D67 / ATCC BAA-1060), this protein is Dihydroxy-acid dehydratase.